Here is a 316-residue protein sequence, read N- to C-terminus: Methionyl-tRNA formyltransferase (316 aa).

111-114 (GLLP) provides a ligand contact to (6S)-5,6,7,8-tetrahydrofolate.

Belongs to the Fmt family.

The catalysed reaction is L-methionyl-tRNA(fMet) + (6R)-10-formyltetrahydrofolate = N-formyl-L-methionyl-tRNA(fMet) + (6S)-5,6,7,8-tetrahydrofolate + H(+). Functionally, attaches a formyl group to the free amino group of methionyl-tRNA(fMet). The formyl group appears to play a dual role in the initiator identity of N-formylmethionyl-tRNA by promoting its recognition by IF2 and preventing the misappropriation of this tRNA by the elongation apparatus. In Chlamydia trachomatis serovar A (strain ATCC VR-571B / DSM 19440 / HAR-13), this protein is Methionyl-tRNA formyltransferase.